A 246-amino-acid chain; its full sequence is DNA polymerase sliding clamp (246 aa).

It belongs to the PCNA family. In terms of assembly, homotrimer. The subunits circularize to form a toroid; DNA passes through its center. Replication factor C (RFC) is required to load the toroid on the DNA.

In terms of biological role, sliding clamp subunit that acts as a moving platform for DNA processing. Responsible for tethering the catalytic subunit of DNA polymerase and other proteins to DNA during high-speed replication. The polypeptide is DNA polymerase sliding clamp (Thermoplasma acidophilum (strain ATCC 25905 / DSM 1728 / JCM 9062 / NBRC 15155 / AMRC-C165)).